Reading from the N-terminus, the 222-residue chain is Thiamine-phosphate synthase (222 aa).

Residues 40 to 44 (QLRDK) and Asn81 contribute to the 4-amino-2-methyl-5-(diphosphooxymethyl)pyrimidine site. Residues Asp82 and Asp101 each contribute to the Mg(2+) site. Ser120 lines the 4-amino-2-methyl-5-(diphosphooxymethyl)pyrimidine pocket. 146-148 (TPT) provides a ligand contact to 2-[(2R,5Z)-2-carboxy-4-methylthiazol-5(2H)-ylidene]ethyl phosphate. A 4-amino-2-methyl-5-(diphosphooxymethyl)pyrimidine-binding site is contributed by Lys149. Residue Gly178 participates in 2-[(2R,5Z)-2-carboxy-4-methylthiazol-5(2H)-ylidene]ethyl phosphate binding.

The protein belongs to the thiamine-phosphate synthase family. The cofactor is Mg(2+).

It carries out the reaction 2-[(2R,5Z)-2-carboxy-4-methylthiazol-5(2H)-ylidene]ethyl phosphate + 4-amino-2-methyl-5-(diphosphooxymethyl)pyrimidine + 2 H(+) = thiamine phosphate + CO2 + diphosphate. The enzyme catalyses 2-(2-carboxy-4-methylthiazol-5-yl)ethyl phosphate + 4-amino-2-methyl-5-(diphosphooxymethyl)pyrimidine + 2 H(+) = thiamine phosphate + CO2 + diphosphate. The catalysed reaction is 4-methyl-5-(2-phosphooxyethyl)-thiazole + 4-amino-2-methyl-5-(diphosphooxymethyl)pyrimidine + H(+) = thiamine phosphate + diphosphate. Its pathway is cofactor biosynthesis; thiamine diphosphate biosynthesis; thiamine phosphate from 4-amino-2-methyl-5-diphosphomethylpyrimidine and 4-methyl-5-(2-phosphoethyl)-thiazole: step 1/1. Condenses 4-methyl-5-(beta-hydroxyethyl)thiazole monophosphate (THZ-P) and 2-methyl-4-amino-5-hydroxymethyl pyrimidine pyrophosphate (HMP-PP) to form thiamine monophosphate (TMP). In Mycobacterium tuberculosis (strain ATCC 25177 / H37Ra), this protein is Thiamine-phosphate synthase.